Consider the following 456-residue polypeptide: Solute carrier family 49 member 4 homolog (456 aa).

Residues 1–29 (MGLEWSSPGERQPLLYPGGPRAPRVFGRR) lie on the Cytoplasmic side of the membrane. Residues 14–15 (LL) carry the Di-leucine motif; mediates lysosomal localization motif. The chain crosses the membrane as a helical span at residues 30–50 (WLVLLLFSLLAFLQGLVWNSW). Topologically, residues 51 to 67 (GPIQNSARTAYNFSGLD) are lumenal. N-linked (GlcNAc...) asparagine glycosylation occurs at Asn62. The chain crosses the membrane as a helical span at residues 68-88 (IALLVLWGPIGFLPCFLFMWL). Residues 89 to 95 (MDNRGLR) lie on the Cytoplasmic side of the membrane. Residues 96 to 116 (VTVLLTALLMVLGAGLRCVPV) form a helical membrane-spanning segment. Over 117–131 (QDLAVRRKLIHGGQL) the chain is Lumenal. Residues 132–152 (LNGFAGPTVMNAAPFLSTTWF) traverse the membrane as a helical segment. The Cytoplasmic portion of the chain corresponds to 153 to 162 (SPDERATATA). Residues 163 to 183 (IASMLSYLGGACAFLVGPLVV) form a helical membrane-spanning segment. Residues 184-207 (PAPNSTSGLLLYSGSVGAIRDRIE) are Lumenal-facing. A glycan (N-linked (GlcNAc...) asparagine) is linked at Asn187. The helical transmembrane segment at 208–228 (AVMYAEFGIIFVVFAAILAYF) threads the bilayer. Residues 229-259 (PSRPPVPPSVAAASRRLSYRTSILRLLSNVR) are Cytoplasmic-facing. A helical transmembrane segment spans residues 260–280 (FLLIVLAYAIPLGFYAGWSGV). Residues 281–292 (LDLILTPVHVTQ) are Lumenal-facing. The helical transmembrane segment at 293–313 (VDAGWVGFWSIVGGCVVGIAV) threads the bilayer. The Cytoplasmic portion of the chain corresponds to 314-326 (GRFADSIRGVLKP). The helical transmembrane segment at 327 to 347 (ILLLLFSGAALSSTWFTLTFL) threads the bilayer. Over 348–362 (SNVTHLPLTTATLYT) the chain is Lumenal. Asn349 is a glycosylation site (N-linked (GlcNAc...) asparagine). A helical transmembrane segment spans residues 363-383 (SCILIGVFLSGTVPIFFEMFV). Residues 384-392 (ETVYPIPEG) are Cytoplasmic-facing. Residues 393–413 (ITCGVVTFLSNLFMGVLLLFL) traverse the membrane as a helical segment. At 414-420 (TLYQTNL) the chain is on the lumenal side. Asn419 carries an N-linked (GlcNAc...) asparagine glycan. A helical membrane pass occupies residues 421–441 (SWLNWCLTGSCFLSLLFIACF). Over 442-456 (RESYDRLYLDVFVSV) the chain is Cytoplasmic.

The protein belongs to the major facilitator superfamily.

Its subcellular location is the lysosome membrane. The catalysed reaction is pyridoxine(out) + n H(+)(out) = pyridoxine(in) + n H(+)(in). Its function is as follows. Mediates H(+)-dependent pyridoxine transport. The polypeptide is Solute carrier family 49 member 4 homolog (slc49a4) (Xenopus tropicalis (Western clawed frog)).